A 334-amino-acid chain; its full sequence is Cobalt-precorrin-5B C(1)-methyltransferase (334 aa).

This sequence belongs to the CbiD family.

The enzyme catalyses Co-precorrin-5B + S-adenosyl-L-methionine = Co-precorrin-6A + S-adenosyl-L-homocysteine. It functions in the pathway cofactor biosynthesis; adenosylcobalamin biosynthesis; cob(II)yrinate a,c-diamide from sirohydrochlorin (anaerobic route): step 6/10. Catalyzes the methylation of C-1 in cobalt-precorrin-5B to form cobalt-precorrin-6A. The polypeptide is Cobalt-precorrin-5B C(1)-methyltransferase (Methanoregula boonei (strain DSM 21154 / JCM 14090 / 6A8)).